We begin with the raw amino-acid sequence, 380 residues long: Erythronate-4-phosphate dehydrogenase (380 aa).

Positions 45 and 66 each coordinate substrate. The NAD(+) site is built by Asp146 and Thr174. Arg207 is an active-site residue. Residue Asp231 coordinates NAD(+). Glu236 is a catalytic residue. Residue His253 is the Proton donor of the active site. An NAD(+)-binding site is contributed by Gly256. Tyr257 serves as a coordination point for substrate.

Belongs to the D-isomer specific 2-hydroxyacid dehydrogenase family. PdxB subfamily. As to quaternary structure, homodimer.

The protein localises to the cytoplasm. The enzyme catalyses 4-phospho-D-erythronate + NAD(+) = (R)-3-hydroxy-2-oxo-4-phosphooxybutanoate + NADH + H(+). Its pathway is cofactor biosynthesis; pyridoxine 5'-phosphate biosynthesis; pyridoxine 5'-phosphate from D-erythrose 4-phosphate: step 2/5. Its function is as follows. Catalyzes the oxidation of erythronate-4-phosphate to 3-hydroxy-2-oxo-4-phosphonooxybutanoate. This Pseudomonas fluorescens (strain Pf0-1) protein is Erythronate-4-phosphate dehydrogenase.